Here is a 505-residue protein sequence, read N- to C-terminus: Cytochrome P450 9b2 (505 aa).

Cys449 is a heme binding site.

This sequence belongs to the cytochrome P450 family. Heme is required as a cofactor.

It is found in the endoplasmic reticulum membrane. It localises to the microsome membrane. May be involved in the metabolism of insect hormones and in the breakdown of synthetic insecticides. The protein is Cytochrome P450 9b2 (Cyp9b2) of Drosophila melanogaster (Fruit fly).